We begin with the raw amino-acid sequence, 275 residues long: Large ribosomal subunit protein uL2 (275 aa).

The disordered stretch occupies residues 222 to 275 (GVAMNPVDHPHGGGEGRNKGRHPTSPWGQKSKGLKTRNNKRTDSMIIRRRAKKK). The segment covering 229–239 (DHPHGGGEGRN) has biased composition (basic and acidic residues).

The protein belongs to the universal ribosomal protein uL2 family. Part of the 50S ribosomal subunit. Forms a bridge to the 30S subunit in the 70S ribosome.

In terms of biological role, one of the primary rRNA binding proteins. Required for association of the 30S and 50S subunits to form the 70S ribosome, for tRNA binding and peptide bond formation. It has been suggested to have peptidyltransferase activity; this is somewhat controversial. Makes several contacts with the 16S rRNA in the 70S ribosome. This is Large ribosomal subunit protein uL2 from Psychrobacter arcticus (strain DSM 17307 / VKM B-2377 / 273-4).